The primary structure comprises 446 residues: MDSIMEPYVADLLADDITASMVELLPGDGGAAQMDVGVLDAYLRAIGALPAHPAAPGADLAAAAEVESMASNDDTNGVLYDWDTKVDVKVPCALLPPPPGFPPLPVPGLADEPVYAAPARHLPPPPGFPPLPVPGLADEPVYAAPARRLPPPPGFPPLPVPAKAEPVYAAPVDEGDAIRAFMQQLEWSEQYNGDNDAPAPDNSTASRPQLCAPYDDDIDANLRDMEKDAAQRPSPDYLDTVQGGQISAAARASLVAWMGRLTHRYELAAGTLHRAVSYFDRFLSVRALPSYTAHQLSLVAATAVYTAAKYEDQGTVFKLDAREIASYGEFASAQEVLAMEREMMAALGYRLGGPNAETFVEHFTRYSKGKEELRVQRLACHVADRSLESYGCLGYLPSMVAAAAISIARWTLNPPGALPWSSELQELTGYSSQDISSCILTVLNTQ.

The segment at 191–216 (YNGDNDAPAPDNSTASRPQLCAPYDD) is disordered.

It belongs to the cyclin family. Cyclin F subfamily.

The polypeptide is Cyclin-F2-2 (CYCF2-2) (Oryza sativa subsp. japonica (Rice)).